The primary structure comprises 344 residues: AA9 family lytic polysaccharide monooxygenase cel61A (344 aa).

The first 21 residues, 1 to 21 (MIQKLSNLLVTALAVATGVVG), serve as a signal peptide directing secretion. Residue H22 coordinates Cu(2+). 2 cysteine pairs are disulfide-bonded: C77-C198 and C118-C122. A glycan (N-linked (GlcNAc...) asparagine) is linked at N80. A Cu(2+)-binding site is contributed by H107. N158 carries N-linked (GlcNAc...) asparagine glycosylation. H184 and Q193 together coordinate O2. Residue Y195 coordinates Cu(2+). Residues 262–310 (ATASATVPGGGSGPTSRTTTTARTTQASSRPSSTPPATTSAPAGGPTQT) are disordered. Residues 275–310 (PTSRTTTTARTTQASSRPSSTPPATTSAPAGGPTQT) show a composition bias toward low complexity. A CBM1 domain is found at 307–343 (PTQTLYGQCGGSGYSGPTRCAPPATCSTLNPYYAQCL).

Belongs to the polysaccharide monooxygenase AA9 family. The cofactor is Cu(2+).

The protein localises to the secreted. The catalysed reaction is [(1-&gt;4)-beta-D-glucosyl]n+m + reduced acceptor + O2 = 4-dehydro-beta-D-glucosyl-[(1-&gt;4)-beta-D-glucosyl]n-1 + [(1-&gt;4)-beta-D-glucosyl]m + acceptor + H2O.. Functionally, lytic polysaccharide monooxygenase (LPMO) that depolymerizes crystalline and amorphous polysaccharides via the oxidation of scissile alpha- or beta-(1-4)-glycosidic bonds, yielding C1 or C4 oxidation products. Catalysis by LPMOs requires the reduction of the active-site copper from Cu(II) to Cu(I) by a reducing agent and H(2)O(2) or O(2) as a cosubstrate. Shows activity on beta-glucan and amorphous cellulose. Does not show beta-1-3-glucanase, beta-1,6-glucanase, mannanase, xylanase, beta-1,3-galactosidase, amylase, pectinase, nor chitinase activities. The sequence is that of AA9 family lytic polysaccharide monooxygenase cel61A from Hypocrea jecorina (Trichoderma reesei).